Reading from the N-terminus, the 217-residue chain is ATP-dependent Clp protease proteolytic subunit (217 aa).

Ser121 (nucleophile) is an active-site residue. His146 is an active-site residue.

The protein belongs to the peptidase S14 family. In terms of assembly, fourteen ClpP subunits assemble into 2 heptameric rings which stack back to back to give a disk-like structure with a central cavity, resembling the structure of eukaryotic proteasomes.

Its subcellular location is the cytoplasm. It carries out the reaction Hydrolysis of proteins to small peptides in the presence of ATP and magnesium. alpha-casein is the usual test substrate. In the absence of ATP, only oligopeptides shorter than five residues are hydrolyzed (such as succinyl-Leu-Tyr-|-NHMec, and Leu-Tyr-Leu-|-Tyr-Trp, in which cleavage of the -Tyr-|-Leu- and -Tyr-|-Trp bonds also occurs).. Its function is as follows. Cleaves peptides in various proteins in a process that requires ATP hydrolysis. Has a chymotrypsin-like activity. Plays a major role in the degradation of misfolded proteins. The chain is ATP-dependent Clp protease proteolytic subunit from Burkholderia cenocepacia (strain HI2424).